The following is a 561-amino-acid chain: Formate--tetrahydrofolate ligase (561 aa).

70–77 (TPAGEGKT) contributes to the ATP binding site.

The protein belongs to the formate--tetrahydrofolate ligase family.

It carries out the reaction (6S)-5,6,7,8-tetrahydrofolate + formate + ATP = (6R)-10-formyltetrahydrofolate + ADP + phosphate. It participates in one-carbon metabolism; tetrahydrofolate interconversion. The chain is Formate--tetrahydrofolate ligase from Pelagibacter ubique (strain HTCC1062).